A 505-amino-acid polypeptide reads, in one-letter code: Folate transporter 1 (505 aa).

Helical transmembrane passes span 58-78, 89-109, 122-142, and 146-166; these read SLIA…IYLL, LSIV…WAVI, YYLL…GLIT, and LFIT…CNVI. 3 N-linked (GlcNAc...) asparagine glycosylation sites follow: Asn177, Asn181, and Asn186. The next 2 membrane-spanning stretches (helical) occupy residues 192–212 and 216–236; these read AFRK…LLLI and HIFL…FFII. Asn240 is a glycosylation site (N-linked (GlcNAc...) asparagine). The next 5 helical transmembrane spans lie at 266–286, 300–320, 326–346, 352–372, and 405–425; these read IIFI…FFYI, MAMF…LFFT, KLLL…LVVI, FLFI…EFIA, and FASI…NITS. N-linked (GlcNAc...) asparagine glycosylation occurs at Asn427. The chain crosses the membrane as a helical span at residues 431–451; that stretch reads LPYMIIICCLTNIIPIFFLYI. An N-linked (GlcNAc...) asparagine glycan is attached at Asn454.

Belongs to the major facilitator superfamily. Folate-biopterin transporter (TC 2.A.71) family.

It localises to the cell membrane. It carries out the reaction folate(in) + H(+)(in) = folate(out) + H(+)(out). Its activity is regulated as follows. Transport of folates is inhibited by probenecid and methotrexate. Its function is as follows. Folate transporter with broad substrate specificity. Transports folic acid, folinic acid, pteroic acid, dihydropteroic acid, the folate precursor p-amino benzoic acid (pABA) and the human folate catabolite pABA monoglutamate. This Plasmodium falciparum (isolate 3D7) protein is Folate transporter 1.